We begin with the raw amino-acid sequence, 727 residues long: Iron-sulfur clusters transporter ATM1, mitochondrial (727 aa).

The transit peptide at 1-25 directs the protein to the mitochondrion; that stretch reads MLIGGAQNRLYQLRTSNILGLLRTR. The Mitochondrial matrix segment spans residues 26–138; the sequence is SALRVGSKVE…PRGNTKVKVR (113 aa). Positions 87–107 are disordered; that stretch reads KSKLPNEDTAHNASEKNSKKT. Over residues 90–107 the composition is skewed to basic and acidic residues; it reads LPNEDTAHNASEKNSKKT. A helical membrane pass occupies residues 139 to 160; the sequence is VLLALALLIGAKVLNVQVPFFF. In terms of domain architecture, ABC transmembrane type-1 spans 139–429; that stretch reads VLLALALLIG…LGSVYRELKQ (291 aa). Residues 161 to 183 are Mitochondrial intermembrane-facing; sequence KQIIDGMNVDWSDATVALPAALG. Residues 184-207 traverse the membrane as a helical segment; the sequence is LTIMCYGLARFGAVLFGELRNAIF. Residues 208–256 are Mitochondrial matrix-facing; the sequence is ARVAQNAIRNVSLQTFEHLMKLDLGWHLSRQTGGLTRAMDRGTKGISYV. The helical transmembrane segment at 257–280 threads the bilayer; that stretch reads LSAMVFHIIPITFEISVVCGILTY. Residue glutamine 281 is a topological domain, mitochondrial intermembrane. A helical transmembrane segment spans residues 282–302; it reads FGASFAGITFTTMLLYSIFTI. At 303–368 the chain is on the mitochondrial matrix side; the sequence is RTTAWRTRFR…SQVKVAQSLA (66 aa). Glutathione-binding positions include 308–312 and 371–374; these read RTRFR and NSGQ. The chain crosses the membrane as a helical span at residues 369–387; that stretch reads FLNSGQSLIFTTALTGMMY. At 388-402 the chain is on the mitochondrial intermembrane side; sequence MGCTGVIGGDLTVGD. The chain crosses the membrane as a helical span at residues 403-424; that stretch reads LVLINQLVFQLSVPLNFLGSVY. Glycine 421 provides a ligand contact to glutathione. Residues 425 to 727 lie on the Mitochondrial matrix side of the membrane; the sequence is RELKQSLIDM…ETLEKLNKSI (303 aa). The ABC transporter domain maps to 465-701; it reads IKFENVTFGY…ENSLYKELWR (237 aa). ATP contacts are provided by residues tyrosine 474 and 498–509; that span reads GPSGSGKSTVLK.

It belongs to the ABC transporter superfamily. ABCB family. Heavy Metal importer (TC 3.A.1.210) subfamily. In terms of assembly, homodimer.

The protein localises to the mitochondrion inner membrane. Performs an essential function in the generation of cytoplasmic iron-sulfur proteins by mediating the ATP-dependent export of Fe/S cluster precursors synthesized by NFS1 and other mitochondrial proteins. Hydrolyzes ATP. Binds glutathione and may function by transporting a glutathione-conjugated iron-sulfur compound. In Candida glabrata (strain ATCC 2001 / BCRC 20586 / JCM 3761 / NBRC 0622 / NRRL Y-65 / CBS 138) (Yeast), this protein is Iron-sulfur clusters transporter ATM1, mitochondrial.